The chain runs to 492 residues: UPF0236 protein TTE0402 (492 aa).

It belongs to the UPF0236 family.

In Caldanaerobacter subterraneus subsp. tengcongensis (strain DSM 15242 / JCM 11007 / NBRC 100824 / MB4) (Thermoanaerobacter tengcongensis), this protein is UPF0236 protein TTE0402.